A 258-amino-acid polypeptide reads, in one-letter code: Thiazole synthase (258 aa).

K98 serves as the catalytic Schiff-base intermediate with DXP. Residues G159, A185–G186, and N207–T208 each bind 1-deoxy-D-xylulose 5-phosphate.

It belongs to the ThiG family. In terms of assembly, homotetramer. Forms heterodimers with either ThiH or ThiS.

The protein localises to the cytoplasm. It catalyses the reaction [ThiS sulfur-carrier protein]-C-terminal-Gly-aminoethanethioate + 2-iminoacetate + 1-deoxy-D-xylulose 5-phosphate = [ThiS sulfur-carrier protein]-C-terminal Gly-Gly + 2-[(2R,5Z)-2-carboxy-4-methylthiazol-5(2H)-ylidene]ethyl phosphate + 2 H2O + H(+). It participates in cofactor biosynthesis; thiamine diphosphate biosynthesis. Its function is as follows. Catalyzes the rearrangement of 1-deoxy-D-xylulose 5-phosphate (DXP) to produce the thiazole phosphate moiety of thiamine. Sulfur is provided by the thiocarboxylate moiety of the carrier protein ThiS. In vitro, sulfur can be provided by H(2)S. In Bacillus cereus (strain ZK / E33L), this protein is Thiazole synthase.